Consider the following 725-residue polypeptide: Putative coiled-coil domain-containing protein 144B (725 aa).

The span at 1–11 shows a compositional bias: basic and acidic residues; the sequence is MASWGGEKRGG. Disordered regions lie at residues 1-25, 87-188, 213-260, 453-485, and 528-586; these read MASW…ATRK, AARS…NLTE, LPEN…DCDR, NMNQ…DSDR, and EEEM…KVKN. Polar residues-rich tracts occupy residues 129–150 and 165–178; these read PESL…LSDE and PSVS…QSAT. Positions 215 to 244 form a coiled coil; it reads ENKESKEAEQDLELTSEEEQERLKGCENKQ. Residues 224–234 show a composition bias toward acidic residues; it reads QDLELTSEEEQ. A compositionally biased stretch (polar residues) spans 453–467; sequence NMNQNSDSGSTNNYK. Positions 490 to 546 form a coiled coil; the sequence is YLHEELQQDMQKFKNEVNTLEEEFLALKKENVQLHKEVEEEMEKHRSNSTELSGTLT. The span at 528 to 537 shows a compositional bias: basic and acidic residues; it reads EEEMEKHRSN. The span at 543 to 552 shows a compositional bias: low complexity; that stretch reads GTLTDGTTVG. Over residues 563-583 the composition is skewed to basic and acidic residues; it reads PRKENEEHDRPADKTANEKNK. The stretch at 648–713 forms a coiled coil; the sequence is LLKLKNNHCD…ALKQENGRKE (66 aa).

Belongs to the CCDC144 family.

The protein is Putative coiled-coil domain-containing protein 144B of Homo sapiens (Human).